We begin with the raw amino-acid sequence, 422 residues long: 3-phosphoshikimate 1-carboxyvinyltransferase (422 aa).

3 residues coordinate 3-phosphoshikimate: Lys-20, Ser-21, and Arg-25. Lys-20 contributes to the phosphoenolpyruvate binding site. Residues Gly-91 and Arg-119 each coordinate phosphoenolpyruvate. Positions 163, 164, 165, 305, 328, and 332 each coordinate 3-phosphoshikimate. Gln-165 lines the phosphoenolpyruvate pocket. The active-site Proton acceptor is Asp-305. Residues Arg-336 and Arg-377 each contribute to the phosphoenolpyruvate site.

This sequence belongs to the EPSP synthase family. In terms of assembly, monomer.

It is found in the cytoplasm. It carries out the reaction 3-phosphoshikimate + phosphoenolpyruvate = 5-O-(1-carboxyvinyl)-3-phosphoshikimate + phosphate. It participates in metabolic intermediate biosynthesis; chorismate biosynthesis; chorismate from D-erythrose 4-phosphate and phosphoenolpyruvate: step 6/7. In terms of biological role, catalyzes the transfer of the enolpyruvyl moiety of phosphoenolpyruvate (PEP) to the 5-hydroxyl of shikimate-3-phosphate (S3P) to produce enolpyruvyl shikimate-3-phosphate and inorganic phosphate. This Ruminiclostridium cellulolyticum (strain ATCC 35319 / DSM 5812 / JCM 6584 / H10) (Clostridium cellulolyticum) protein is 3-phosphoshikimate 1-carboxyvinyltransferase.